Reading from the N-terminus, the 345-residue chain is Dihydroorotase (345 aa).

The Zn(2+) site is built by histidine 13 and histidine 15. Substrate contacts are provided by residues 15–17 (HFR) and asparagine 41. Positions 98, 135, and 173 each coordinate Zn(2+). Lysine 98 bears the N6-carboxylysine mark. Histidine 135 serves as a coordination point for substrate. A substrate-binding site is contributed by leucine 218. Aspartate 246 is a binding site for Zn(2+). The active site involves aspartate 246. Residues histidine 250 and alanine 262 each coordinate substrate.

Belongs to the metallo-dependent hydrolases superfamily. DHOase family. Class II DHOase subfamily. In terms of assembly, homodimer. The cofactor is Zn(2+).

The enzyme catalyses (S)-dihydroorotate + H2O = N-carbamoyl-L-aspartate + H(+). The protein operates within pyrimidine metabolism; UMP biosynthesis via de novo pathway; (S)-dihydroorotate from bicarbonate: step 3/3. Functionally, catalyzes the reversible cyclization of carbamoyl aspartate to dihydroorotate. This Shewanella halifaxensis (strain HAW-EB4) protein is Dihydroorotase.